The chain runs to 1104 residues: Inhibitory regulator protein BUD2/CLA2 (1104 aa).

Ser-2 carries the post-translational modification N-acetylserine. Positions 316 to 444 (RSEYLSITGS…RYNKETRLPI (129 aa)) constitute a C2 domain. The region spanning 536–753 (AKIDGTVSRI…NDLLDYIDKM (218 aa)) is the Ras-GAP domain. Position 854 is a phosphoserine (Ser-854). The interval 1027-1104 (NPKSSNKTSV…FKKKKETGGS (78 aa)) is disordered. Composition is skewed to polar residues over residues 1029-1043 (KSSN…SSEN) and 1052-1069 (LPNS…SPTK). A compositionally biased stretch (basic residues) spans 1090 to 1104 (KLTRWFKKKKETGGS).

Its function is as follows. Stimulates the GTPase activity of BUD1/RSR1. Participates in the regulation of bud-site selection. The sequence is that of Inhibitory regulator protein BUD2/CLA2 (BUD2) from Saccharomyces cerevisiae (strain ATCC 204508 / S288c) (Baker's yeast).